A 277-amino-acid chain; its full sequence is Large ribosomal subunit protein uL2 (277 aa).

The segment at 212–277 is disordered; it reads RWRGKRPHVR…KFIVRGRKSK (66 aa). The span at 254–277 shows a compositional bias: basic residues; it reads TAGKKTRDKKKASTKFIVRGRKSK.

It belongs to the universal ribosomal protein uL2 family. Part of the 50S ribosomal subunit. Forms a bridge to the 30S subunit in the 70S ribosome.

One of the primary rRNA binding proteins. Required for association of the 30S and 50S subunits to form the 70S ribosome, for tRNA binding and peptide bond formation. It has been suggested to have peptidyltransferase activity; this is somewhat controversial. Makes several contacts with the 16S rRNA in the 70S ribosome. This Leuconostoc citreum (strain KM20) protein is Large ribosomal subunit protein uL2.